The sequence spans 1024 residues: Multidrug resistance protein MdtC (1024 aa).

Helical transmembrane passes span 12–32 (VATT…FSLL), 333–353 (EVER…FIFL), 360–380 (LIPA…MYLC), 387–407 (LSLM…IVVL), 435–455 (VLSM…MAGL), 469–489 (VAIG…CAWL), 528–548 (WVMV…ISIP), 853–873 (LWLI…LYES), 875–895 (VHPL…LLAL), 897–917 (LFDA…IGIV), 953–973 (PIIM…LSSG), and 984–1004 (ITIV…TPVI).

It belongs to the resistance-nodulation-cell division (RND) (TC 2.A.6) family. MdtC subfamily. In terms of assembly, part of a tripartite efflux system composed of MdtA, MdtB and MdtC. MdtC forms a heteromultimer with MdtB.

Its subcellular location is the cell inner membrane. This is Multidrug resistance protein MdtC from Yersinia pseudotuberculosis serotype IB (strain PB1/+).